Reading from the N-terminus, the 229-residue chain is Large ribosomal subunit protein uL1 (229 aa).

This sequence belongs to the universal ribosomal protein uL1 family. As to quaternary structure, part of the 50S ribosomal subunit.

In terms of biological role, binds directly to 23S rRNA. The L1 stalk is quite mobile in the ribosome, and is involved in E site tRNA release. Functionally, protein L1 is also a translational repressor protein, it controls the translation of the L11 operon by binding to its mRNA. This is Large ribosomal subunit protein uL1 from Listeria innocua serovar 6a (strain ATCC BAA-680 / CLIP 11262).